A 90-amino-acid chain; its full sequence is Evasin P1128 (90 aa).

Residues 1 to 18 (MFIALGIQLFVAVTYAAG) form the signal peptide. Disulfide bonds link C29–C51, C33–C53, and C44–C64. A glycan (N-linked (GlcNAc...) asparagine) is linked at N32.

Its subcellular location is the secreted. Its function is as follows. Salivary chemokine-binding protein which binds to host chemokines CXCL1, CXCL2, CXCL3, CXCL5 and CXCL8. The polypeptide is Evasin P1128 (Ixodes ricinus (Common tick)).